Here is a 320-residue protein sequence, read N- to C-terminus: tRNA pseudouridine synthase B (320 aa).

Asp49 functions as the Nucleophile in the catalytic mechanism.

It belongs to the pseudouridine synthase TruB family. Type 1 subfamily.

It carries out the reaction uridine(55) in tRNA = pseudouridine(55) in tRNA. Functionally, responsible for synthesis of pseudouridine from uracil-55 in the psi GC loop of transfer RNAs. This chain is tRNA pseudouridine synthase B, found in Bartonella bacilliformis (strain ATCC 35685 / KC583 / Herrer 020/F12,63).